The sequence spans 88 residues: Large ribosomal subunit protein eL31 (88 aa).

Belongs to the eukaryotic ribosomal protein eL31 family.

The chain is Large ribosomal subunit protein eL31 (rpl31e) from Archaeoglobus fulgidus (strain ATCC 49558 / DSM 4304 / JCM 9628 / NBRC 100126 / VC-16).